The chain runs to 156 residues: Ribosomal RNA large subunit methyltransferase H (156 aa).

S-adenosyl-L-methionine is bound by residues L73, G104, and 123–128; that span reads LSSLTL.

This sequence belongs to the RNA methyltransferase RlmH family. As to quaternary structure, homodimer.

It localises to the cytoplasm. The enzyme catalyses pseudouridine(1915) in 23S rRNA + S-adenosyl-L-methionine = N(3)-methylpseudouridine(1915) in 23S rRNA + S-adenosyl-L-homocysteine + H(+). Its function is as follows. Specifically methylates the pseudouridine at position 1915 (m3Psi1915) in 23S rRNA. The protein is Ribosomal RNA large subunit methyltransferase H of Ralstonia pickettii (strain 12J).